Here is a 313-residue protein sequence, read N- to C-terminus: Non-structural protein 3 (313 aa).

Residues 1 to 149 (MLKMESTQQM…TRLMKEKIER (149 aa)) form an RNA-binding region. Residues 150–206 (GEVEVDDAFVEEKMEVDTIDWKSRYEQLEKRFESLKQRVNEKYNNWVIKARKDNENM) are dimerization. Residues 166–237 (DTIDWKSRYE…NKLERDLQSK (72 aa)) adopt a coiled-coil conformation. The interval 170–234 (WKSRYEQLEK…IYNNKLERDL (65 aa)) is interaction with host ZC3H7B. Residues 208–313 (SLQNVISQQQ…QQSNYIYTYE (106 aa)) form an interaction with host EIF4G1 region.

The protein belongs to the rotavirus NSP3 family. As to quaternary structure, homodimer. Interacts (via the coiled-coil region) with host ZC3H7B (via LD motif). Interacts with host EIF4G1.

It localises to the host cytoplasm. Its function is as follows. Plays an important role in stimulating the translation of viral mRNAs. These mRNAs are capped but not polyadenylated, instead terminating in a conserved sequence 'GACC' at the 3' that is recognized by NSP3, which competes with host PABPC1 for EIF4G1 binding. The interaction between NSP3 and host EIF4G1 stabilizes the EIF4E-EIF4G1 interaction, thereby facilitating the initiation of capped mRNA translation. The sequence is that of Non-structural protein 3 from Rotavirus A (strain RVA/Human/Indonesia/69M/1980/G8P4[10]) (RV-A).